The primary structure comprises 1124 residues: Probable leucine-rich repeat receptor-like protein kinase At2g33170 (1124 aa).

An N-terminal signal peptide occupies residues 1–32 (MGWWIFEFKKESKSMFVGVLFLLTLLVWTSES). Topologically, residues 33-752 (LNSDGQFLLE…LKAGSARRGR (720 aa)) are extracellular. N-linked (GlcNAc...) asparagine glycosylation is found at Asn72, Asn96, and Asn131. LRR repeat units lie at residues 86 to 109 (VVTSLDLSSMNLSGIVSPSIGGLV), 110 to 132 (NLVYLNLAYNALTGDIPREIGNC), 134 to 156 (KLEVMFLNNNQFGGSIPVEINKL), 158 to 180 (QLRSFNICNNKLSGPLPEEIGDL), 182 to 205 (NLEELVAYTNNLTGPLPRSLGNLN), 206 to 228 (KLTTFRAGQNDFSGNIPTEIGKC), 230 to 252 (NLKLLGLAQNFISGELPKEIGML), 254 to 277 (KLQEVILWQNKFSGFIPKDIGNLT), 278 to 300 (SLETLALYGNSLVGPIPSEIGNM), 302 to 325 (SLKKLYLYQNQLNGTIPKELGKLS), 326 to 348 (KVMEIDFSENLLSGEIPVELSKI), 350 to 371 (ELRLLYLFQNKLTGIIPNELSK), 374 to 397 (NLAKLDLSINSLTGPIPPGFQNLT), 398 to 420 (SMRQLQLFHNSLSGVIPQGLGLY), 422 to 444 (PLWVVDFSENQLSGKIPPFICQQ), 446 to 468 (NLILLNLGSNRIFGNIPPGVLRC), 470 to 491 (SLLQLRVVGNRLTGQFPTELCK), 494 to 516 (NLSAIELDQNRFSGPLPPEIGTC), 518 to 540 (KLQRLHLAANQFSSNLPNEISKL), 542 to 564 (NLVTFNVSSNSLTGPIPSEIANC), 566 to 588 (MLQRLDLSRNSFIGSLPPELGSL), 590 to 613 (QLEILRLSENRFSGNIPFTIGNLT), 614 to 636 (HLTELQMGGNLFSGSIPPQLGLL), 638 to 661 (SLQIAMNLSYNDFSGEIPPEIGNL), 663 to 686 (LLMYLSLNNNHLSGEIPTTFENLS), and 687 to 709 (SLLGCNFSYNNLTGQLPHTQIFQ). A glycan (N-linked (GlcNAc...) asparagine) is linked at Asn192. The N-linked (GlcNAc...) asparagine glycan is linked to Asn275. Asn314 is a glycosylation site (N-linked (GlcNAc...) asparagine). An N-linked (GlcNAc...) asparagine glycan is attached at Asn395. Residue Asn494 is glycosylated (N-linked (GlcNAc...) asparagine). Asn547 carries an N-linked (GlcNAc...) asparagine glycan. Asn611 is a glycosylation site (N-linked (GlcNAc...) asparagine). N-linked (GlcNAc...) asparagine glycosylation is found at Asn644, Asn684, Asn692, Asn697, and Asn710. Residues 753–773 (IIIIVSSVIGGISLLLIAIVV) form a helical membrane-spanning segment. Residues 774–1124 (HFLRNPVEPT…CSDLPPPAPP (351 aa)) lie on the Cytoplasmic side of the membrane. Phosphothreonine is present on residues Thr808 and Thr816. Residues 819–1100 (FHDSYIVGRG…TMREVVLMLI (282 aa)) form the Protein kinase domain. ATP-binding positions include 825–833 (VGRGACGTV) and Lys847. Residues Tyr901 and Tyr939 each carry the phosphotyrosine modification. Asp952 serves as the catalytic Proton acceptor. Residue Ser986 is modified to Phosphoserine. Phosphotyrosine is present on residues Tyr994 and Tyr1001. Phosphothreonine is present on Thr1002.

The protein belongs to the protein kinase superfamily. Ser/Thr protein kinase family.

It localises to the membrane. It carries out the reaction L-seryl-[protein] + ATP = O-phospho-L-seryl-[protein] + ADP + H(+). It catalyses the reaction L-threonyl-[protein] + ATP = O-phospho-L-threonyl-[protein] + ADP + H(+). This Arabidopsis thaliana (Mouse-ear cress) protein is Probable leucine-rich repeat receptor-like protein kinase At2g33170.